We begin with the raw amino-acid sequence, 104 residues long: Large ribosomal subunit protein uL24 (104 aa).

This sequence belongs to the universal ribosomal protein uL24 family. Part of the 50S ribosomal subunit.

In terms of biological role, one of two assembly initiator proteins, it binds directly to the 5'-end of the 23S rRNA, where it nucleates assembly of the 50S subunit. Functionally, one of the proteins that surrounds the polypeptide exit tunnel on the outside of the subunit. This chain is Large ribosomal subunit protein uL24, found in Caulobacter vibrioides (strain ATCC 19089 / CIP 103742 / CB 15) (Caulobacter crescentus).